Consider the following 377-residue polypeptide: 5-hydroxytryptamine receptor 1D (377 aa).

3 N-linked (GlcNAc...) asparagine glycosylation sites follow: Asn5, Asn17, and Asn21. The next 3 membrane-spanning stretches (helical) occupy residues 39-64 (ISLA…TTIF), 76-97 (LIGS…ISIA), and 110-134 (LCDI…VIAL). Cysteines 111 and 188 form a disulfide. Residues Asp118 and Cys122 each contribute to the serotonin site. The DRY motif; important for ligand-induced conformation changes signature appears at 135-137 (DRY). The next 4 membrane-spanning stretches (helical) occupy residues 155–176 (AAVM…PLFW), 195–218 (ISYT…ILYG), 301–326 (KTLG…VLPI), and 336–359 (ALFD…YTVF). Ser321 is a binding site for serotonin. The NPxxY motif; important for ligand-induced conformation changes and signaling motif lies at 352 to 356 (NPIIY).

It belongs to the G-protein coupled receptor 1 family. As to quaternary structure, homodimer. Heterodimer with HTR1B.

The protein resides in the cell membrane. Functionally, G-protein coupled receptor for 5-hydroxytryptamine (serotonin). Also functions as a receptor for ergot alkaloid derivatives, various anxiolytic and antidepressant drugs and other psychoactive substances. Ligand binding causes a conformation change that triggers signaling via guanine nucleotide-binding proteins (G proteins) and modulates the activity of downstream effectors, such as adenylate cyclase. HTR1D is coupled to G(i)/G(o) G alpha proteins and mediates inhibitory neurotransmission by inhibiting adenylate cyclase activity. Regulates the release of 5-hydroxytryptamine in the brain, and thereby affects neural activity. May also play a role in regulating the release of other neurotransmitters. May play a role in vasoconstriction. This Canis lupus familiaris (Dog) protein is 5-hydroxytryptamine receptor 1D (HTR1D).